The chain runs to 384 residues: Ribonucleoside-diphosphate reductase small chain (384 aa).

The Fe cation site is built by D130, E161, and H164. The active site involves Y168. Positions 224, 258, and 261 each coordinate Fe cation.

The protein belongs to the ribonucleoside diphosphate reductase small chain family. In terms of assembly, heterodimer of a large and a small subunit. It depends on Fe cation as a cofactor.

The catalysed reaction is a 2'-deoxyribonucleoside 5'-diphosphate + [thioredoxin]-disulfide + H2O = a ribonucleoside 5'-diphosphate + [thioredoxin]-dithiol. In terms of biological role, provides the precursors necessary for DNA synthesis. Catalyzes the biosynthesis of deoxyribonucleotides from the corresponding ribonucleotides. This Spisula solidissima (Atlantic surf-clam) protein is Ribonucleoside-diphosphate reductase small chain.